Consider the following 859-residue polypeptide: Protein EFR3 homolog (859 aa).

Disordered regions lie at residues 638-657 (DDPLSSTAVNGTIPEGTPRT) and 697-724 (RDGNGDSWQREDGQNFDSTDGRESPDGY). Residues 704 to 722 (WQREDGQNFDSTDGRESPD) show a composition bias toward basic and acidic residues.

This sequence belongs to the EFR3 family.

This Caenorhabditis briggsae protein is Protein EFR3 homolog.